A 418-amino-acid polypeptide reads, in one-letter code: Tyrosine--tRNA ligase (418 aa).

L-tyrosine is bound at residue Tyr35. The short motif at 40 to 49 (PTAKSLHIGH) is the 'HIGH' region element. Residues Tyr168 and Gln172 each coordinate L-tyrosine. The 'KMSKS' region motif lies at 228-232 (KYGKT). Lys231 lines the ATP pocket. In terms of domain architecture, S4 RNA-binding spans 352–410 (PTVVGAMVAAGVVDTKSGGRRAVAEGGAYLNNVKVADPDQRLTDDDFLCGRVALVRRGK).

The protein belongs to the class-I aminoacyl-tRNA synthetase family. TyrS type 1 subfamily. In terms of assembly, homodimer.

It is found in the cytoplasm. The catalysed reaction is tRNA(Tyr) + L-tyrosine + ATP = L-tyrosyl-tRNA(Tyr) + AMP + diphosphate + H(+). In terms of biological role, catalyzes the attachment of tyrosine to tRNA(Tyr) in a two-step reaction: tyrosine is first activated by ATP to form Tyr-AMP and then transferred to the acceptor end of tRNA(Tyr). This chain is Tyrosine--tRNA ligase, found in Cutibacterium acnes (strain DSM 16379 / KPA171202) (Propionibacterium acnes).